The primary structure comprises 358 residues: C-X-C chemokine receptor type 2 (358 aa).

The Extracellular segment spans residues 1–46 (MQEFTWENYSYEDFFGDFSNYSYSTDLPPTLLDSAPCRSESLETNS). 2 N-linked (GlcNAc...) asparagine glycosylation sites follow: Asn8 and Asn20. A helical transmembrane segment spans residues 47 to 73 (YVVLITYILVFLLSLLGNSLVMLVILY). At 74-82 (SRSTCSVTD) the chain is on the cytoplasmic side. The helical transmembrane segment at 83–103 (VYLLNLAIADLLFATTLPIWA) threads the bilayer. Residues 104 to 118 (ASKVHGWTFGTPLCK) are Extracellular-facing. Cys117 and Cys194 form a disulfide bridge. Residues 119 to 140 (VVSLVKEVNFYSGILLLACISV) traverse the membrane as a helical segment. Over 141-161 (DRYLAIVHATRTMIQKRHLVK) the chain is Cytoplasmic. Residues 162–181 (FICLSMWGVSLILSLPILLF) traverse the membrane as a helical segment. Residues 182 to 206 (RNAIFPPNSSPVCYEDMGNSTAKWR) are Extracellular-facing. The helical transmembrane segment at 207 to 229 (MVLRILPQTFGFILPLLVMLFCY) threads the bilayer. The Cytoplasmic portion of the chain corresponds to 230–249 (VFTLRTLFQAHMGQKHRAMR). Residues 250 to 271 (VIFAVVLIFLLCWLPYNLVLLT) traverse the membrane as a helical segment. Residues 272–292 (DTLMRTHVIQETCERRNDIDR) are Extracellular-facing. The helical transmembrane segment at 293–313 (ALDATEILGFLHSCLNPIIYA) threads the bilayer. Over 314–358 (FIGQKFRYGLLKILAAHGLISKEFLAKESRPSFVASSSGNTSTTL) the chain is Cytoplasmic.

It belongs to the G-protein coupled receptor 1 family. As to quaternary structure, interacts with IL8. Interacts with GNAI2. In terms of processing, phosphorylated upon ligand binding; which is required for desensitization. In terms of tissue distribution, expressed preferentially in neutrophils.

The protein localises to the cell membrane. Receptor for interleukin-8 which is a powerful neutrophil chemotactic factor. Binding of IL-8 to the receptor causes activation of neutrophils. This response is mediated via a G-protein that activates a phosphatidylinositol-calcium second messenger system. Binds to IL-8 with high affinity. Also binds with high affinity to CXCL3, GRO/MGSA and NAP-2. The polypeptide is C-X-C chemokine receptor type 2 (CXCR2) (Oryctolagus cuniculus (Rabbit)).